Reading from the N-terminus, the 86-residue chain is uncharacterized protein (86 aa).

The first 22 residues, 1–22, serve as a signal peptide directing secretion; it reads MKTINTVVAAMALSTLSFGVFA.

Belongs to the BhsA/McbA family.

The protein localises to the periplasm. This is an uncharacterized protein from Escherichia coli O6:H1 (strain CFT073 / ATCC 700928 / UPEC).